Consider the following 887-residue polypeptide: Exosome complex component 10 (887 aa).

The segment covering 1–10 has biased composition (basic and acidic residues); it reads MAPPSPREHQ. A disordered region spans residues 1–23; the sequence is MAPPSPREHQSAPATSATKPDAE. Lysine 19 is covalently cross-linked (Glycyl lysine isopeptide (Lys-Gly) (interchain with G-Cter in SUMO2)). In terms of domain architecture, 3'-5' exonuclease spans 289-455; it reads HLVSSLDELV…YIYDRMRLEL (167 aa). Aspartate 313, glutamate 315, aspartate 371, and aspartate 440 together coordinate Mg(2+). In terms of domain architecture, HRDC spans 503 to 583; it reads NSQQLTAFQL…QQAREMPLLK (81 aa). Lysine 583 is covalently cross-linked (Glycyl lysine isopeptide (Lys-Gly) (interchain with G-Cter in SUMO1); alternate). Residue lysine 583 forms a Glycyl lysine isopeptide (Lys-Gly) (interchain with G-Cter in SUMO2); alternate linkage. A Glycyl lysine isopeptide (Lys-Gly) (interchain with G-Cter in SUMO2) cross-link involves residue lysine 710. Disordered regions lie at residues 734–757 and 777–887; these read KEPK…AKEE and NATK…WPKR. A compositionally biased stretch (basic and acidic residues) spans 778–796; that stretch reads ATKKRERATSDLRTIEQKQ. A Phosphoserine modification is found at serine 823. Residues lysine 835, lysine 861, and lysine 875 each participate in a glycyl lysine isopeptide (Lys-Gly) (interchain with G-Cter in SUMO2) cross-link.

The protein belongs to the exosome component 10/RRP6 family. As to quaternary structure, component of the RNA exosome complex. The catalytically inactive RNA exosome core complex (Exo-9) associates with the catalytic subunit EXOSC10/RRP6 (via its N-terminus). Exo-9 may associate with DIS3 to form the nucleolar exosome complex, or DIS3L to form the cytoplasmic exosome complex. The RNA exosome complex interacts with cofactors C1D/RRP47, MPHOSPH6/MPP6 and MTREX/MTR4. Interacts with MTREX; the interaction with MTREX mediates the association of MTREX with nuclear RNA exosomes. Part of the small subunit (SSU) processome, composed of more than 70 proteins and the RNA chaperone small nucleolar RNA (snoRNA) U3. Interacts with ALYREF/THOC4. Interacts with DHX36; this interaction occurs in a RNase-insensitive manner. Interacts with NRDE2. Interacts (via C-terminus) with USP36 (via C-terminus); the interaction is facilitated by the association with RNA and promotes sumoylation of EXOSC10. Mg(2+) serves as cofactor. In terms of processing, sumoylated by USP36; sumoylation does not significantly affect EXOSC10 nucleolar localization and association with core exosome and USP36, but regulates the nucleolar RNA exosome activity in rRNA processing by promoting binding of EXOSC10 to pre-rRNAs. Effects of sumoylation on EXOSC10 levels vary between different studies. Sumoylation of EXOSC10 is required for the modulation of EXOSC10 effects on cellular protein translation and cell proliferation. Sumoylation is promoted by mild hypothermia. As to expression, expressed in ovary (at protein level). Expressed in testis (at protein level). Expressed in lung (at protein level).

The protein resides in the cytoplasm. It localises to the nucleus. Its subcellular location is the nucleolus. The protein localises to the nucleoplasm. Its function is as follows. Catalytic component of the RNA exosome complex which has 3'-&gt;5' exoribonuclease activity and participates in a multitude of cellular RNA processing and degradation events. In the nucleus, the RNA exosome complex is involved in proper maturation of stable RNA species such as rRNA, snRNA and snoRNA, in the elimination of RNA processing by-products and non-coding 'pervasive' transcripts, such as antisense RNA species and promoter-upstream transcripts (PROMPTs), and of mRNAs with processing defects, thereby limiting or excluding their export to the cytoplasm. Part of the small subunit (SSU) processome, first precursor of the small eukaryotic ribosomal subunit. During the assembly of the SSU processome in the nucleolus, many ribosome biogenesis factors, an RNA chaperone and ribosomal proteins associate with the nascent pre-rRNA and work in concert to generate RNA folding, modifications, rearrangements and cleavage as well as targeted degradation of pre-ribosomal RNA by the RNA exosome. The RNA exosome may be involved in Ig class switch recombination (CSR) and/or Ig variable region somatic hypermutation (SHM) by targeting AICDA deamination activity to transcribed dsDNA substrates. In the cytoplasm, the RNA exosome complex is involved in general mRNA turnover and specifically degrades inherently unstable mRNAs containing AU-rich elements (AREs) within their 3' untranslated regions, and in RNA surveillance pathways, preventing translation of aberrant mRNAs. It seems to be involved in degradation of histone mRNA. EXOSC10 is required for nucleolar localization of C1D and probably mediates the association of MTREX, C1D and MPHOSPH6 with the RNA exosome involved in the maturation of 5.8S rRNA. Plays a role in the recruitment of replication protein A complex (RPA) and RAD51 to DNA double-strand breaks caused by irradiation, contributing to DNA repair by homologous recombination. Regulates levels of damage-induced RNAs in order to prevent DNA-RNA hybrid formation at DNA double-strand breaks and limit DNA end resection after damage. Plays a role in oocyte development, maturation and survival. Required for normal testis development and mitotic division of spermatogonia. Plays a role in proper embryo development. Required for global protein translation. Required for cell proliferation. The sequence is that of Exosome complex component 10 (Exosc10) from Mus musculus (Mouse).